The chain runs to 387 residues: uncharacterized protein (387 aa).

Disordered stretches follow at residues 1 to 126 (MDGR…GDDE), 138 to 169 (GNQG…RNEE), and 275 to 298 (SSIF…AGNK). The segment covering 32 to 45 (SSDHRTSNSAESKK) has biased composition (basic and acidic residues). 2 stretches are compositionally biased toward polar residues: residues 49–63 (SGKS…NNDN) and 78–93 (DLSS…SKGT). Over residues 155-169 (ENGKNDIEKNNRNEE) the composition is skewed to basic and acidic residues. Residues 275-296 (SSIFSDSQAVTTDDEGISSTAG) are compositionally biased toward polar residues.

The protein belongs to the ThrE exporter (TC 2.A.79) family.

This is an uncharacterized protein from Saccharomyces cerevisiae (strain ATCC 204508 / S288c) (Baker's yeast).